Consider the following 212-residue polypeptide: uncharacterized protein (212 aa).

Residues G53, E74, and D96 each contribute to the S-adenosyl-L-methionine site.

The protein belongs to the methyltransferase superfamily. YrrT family.

Could be a S-adenosyl-L-methionine-dependent methyltransferase. This is an uncharacterized protein from Anoxybacillus flavithermus (strain DSM 21510 / WK1).